Here is an 86-residue protein sequence, read N- to C-terminus: UPF0180 protein CA_C1486 (86 aa).

The protein belongs to the UPF0180 family.

The polypeptide is UPF0180 protein CA_C1486 (Clostridium acetobutylicum (strain ATCC 824 / DSM 792 / JCM 1419 / IAM 19013 / LMG 5710 / NBRC 13948 / NRRL B-527 / VKM B-1787 / 2291 / W)).